The chain runs to 445 residues: Dihydroorotate dehydrogenase (quinone), mitochondrial (445 aa).

A mitochondrion-targeting transit peptide spans 1–16 (MNSGFPRILSKKLFTL). The helical transmembrane segment at 39–56 (LLKYTVGIAIGSFAGFYF) threads the bilayer. Residues 124–128 (AGLDK) and Ser-148 contribute to the FMN site. Lys-128 contributes to the substrate binding site. 173–177 (NRYGF) contacts substrate. FMN is bound by residues Asn-221 and Asn-251. 251–256 (NVSSPN) serves as a coordination point for substrate. The active-site Nucleophile is Ser-254. FMN is bound by residues Lys-302 and Ser-330. 331–332 (NT) is a substrate binding site. Residues Gly-356, Gly-386, and 407 to 408 (YT) each bind FMN.

Belongs to the dihydroorotate dehydrogenase family. Type 2 subfamily. It depends on FMN as a cofactor.

The protein localises to the mitochondrion inner membrane. It catalyses the reaction (S)-dihydroorotate + a quinone = orotate + a quinol. It functions in the pathway pyrimidine metabolism; UMP biosynthesis via de novo pathway; orotate from (S)-dihydroorotate (quinone route): step 1/1. In terms of biological role, catalyzes the conversion of dihydroorotate to orotate with quinone as electron acceptor. The sequence is that of Dihydroorotate dehydrogenase (quinone), mitochondrial (URA9) from Kluyveromyces lactis (strain ATCC 8585 / CBS 2359 / DSM 70799 / NBRC 1267 / NRRL Y-1140 / WM37) (Yeast).